We begin with the raw amino-acid sequence, 137 residues long: Ribosome-binding factor A (137 aa).

Belongs to the RbfA family. As to quaternary structure, monomer. Binds 30S ribosomal subunits, but not 50S ribosomal subunits or 70S ribosomes.

It is found in the cytoplasm. Functionally, one of several proteins that assist in the late maturation steps of the functional core of the 30S ribosomal subunit. Associates with free 30S ribosomal subunits (but not with 30S subunits that are part of 70S ribosomes or polysomes). Required for efficient processing of 16S rRNA. May interact with the 5'-terminal helix region of 16S rRNA. This chain is Ribosome-binding factor A, found in Shewanella amazonensis (strain ATCC BAA-1098 / SB2B).